An 809-amino-acid chain; its full sequence is E3 ubiquitin-protein ligase RSP5 (809 aa).

Positions 1 to 105 (MPSSISVKLV…GHLDEDTATS (105 aa)) constitute a C2 domain. 3 disordered regions span residues 99–122 (DEDT…KKSN), 139–240 (PSSS…RRTD), and 257–298 (WKRP…DNSS). The segment covering 108–122 (RPREETITRDLKKSN) has biased composition (basic and acidic residues). The span at 139–148 (PSSSPHSQAP) shows a compositional bias: polar residues. The span at 149–183 (SGHTASSSTNTSSTTRTNGHSTSSTRNHSTSHPSR) shows a compositional bias: low complexity. A compositionally biased stretch (polar residues) spans 184–196 (GTAQAVESTLQSG). Over residues 197–219 (TTAATNTATTSHRSTNSTSSATR) the composition is skewed to low complexity. 3 WW domains span residues 229-262 (GRLP…RPTL), 331-364 (GELP…DPRR), and 387-420 (GPLP…DPRL). K258 participates in a covalent cross-link: Glycyl lysine isopeptide (Lys-Gly) (interchain with G-Cter in ubiquitin). The HECT domain maps to 705–809 (YRGYQESDEV…VEETIGFGQE (105 aa)). Residue C777 is the Glycyl thioester intermediate of the active site.

This sequence belongs to the RSP5/NEDD4 family. In terms of assembly, component of the RSP5-BUL1/2 ubiquitin ligase complex composed of at least RSP5 and BUL1 or BUL2. Component of the RSP5-UBA1-UBC5 ubiquitin ligase complex composed of E3 RSP5, E1 UBA1 and E2 UBC5. Also forms a ternary complex with RUP1 and UBP2. Interacts (via WW domains) with LSB1. Interacts (via WW domains) with PIN3/LSB2. Interacts (via WW domains) with RCR1 (via PY motifs). Interacts with UBP2; the interaction is direct. Interacts with HSE1. Interacts with LAS17. Interacts with ROG3. Interacts with ROD1. Interacts with RVS167. Interacts with ubiquitin. In terms of processing, the ubiquitination appears to be the result of an intramolecular transfer of ubiquitin.

The protein localises to the cytoplasm. The protein resides in the nucleus. Its subcellular location is the cytoskeleton. It localises to the actin patch. It carries out the reaction S-ubiquitinyl-[E2 ubiquitin-conjugating enzyme]-L-cysteine + [acceptor protein]-L-lysine = [E2 ubiquitin-conjugating enzyme]-L-cysteine + N(6)-ubiquitinyl-[acceptor protein]-L-lysine.. It functions in the pathway protein modification; protein ubiquitination. Functionally, E3 ubiquitin-protein ligase which accepts ubiquitin from an E2 ubiquitin-conjugating enzyme in the form of a thioester and then directly transfers the ubiquitin to targeted substrates. Component of a RSP5 ubiquitin ligase complex which specifies polyubiquitination and intracellular trafficking of the general amino acid permease GAP1 as well as other cell surface proteins like GAP1, FUR4, MAL61, PMA1 and STE2. The RSP5-BUL1/2 complex is also necessary for the heat-shock element (HSE)-mediated gene expression, nitrogen starvation GLN3-dependent transcription, pressure-induced differential regulation of the two tryptophan permeases TAT1 and TAT2 and sorting efficiency into multivesicular bodies. The RSP5-UBA1-UBC5 ubiquitin ligase complex ubiquitinates RPO21 forming 'Lys-63'-linked polyubiquitin chains. Plays a role in tolerance to o-dinitrobenzene. Involved in actin cytoskeleton organization and dynamics. Ubiquitinates the LAS17-binding proteins LSB1 and PIN3/LSB2 without directing them for degradation and affects LAS17 levels in a SLA1-dependent and LSB1/2-independent manner. Also involved in the degradation of non-functional 18S rRNAs in response to stalled ribosomes by mediating polyubiquitination of monoubiquitinated RPS3/uS3: mediates formation of 'Lys-63'-linked polyubiquitin chains on monoubiquitined RPS3/uS3, promoting the degradation of non-functional 18S rRNAs. The protein is E3 ubiquitin-protein ligase RSP5 (RSP5) of Saccharomyces cerevisiae (strain ATCC 204508 / S288c) (Baker's yeast).